Reading from the N-terminus, the 135-residue chain is Histone H3 type 2 (135 aa).

The tract at residues 1-40 is disordered; the sequence is MARTKQTARKSTGGKAPRKQLATKAARKTPATGGVKKPHR. Position 5 is an N6-methyllysine (K5). K10 bears the N6-acetyllysine; alternate mark. K10 bears the N6-methyllysine; alternate mark. At S11 the chain carries Phosphoserine. T12 is subject to Phosphothreonine. Residues K15, K19, and K24 each carry the N6-acetyllysine modification. Position 28 is an N6-acetyllysine; alternate (K28). N6-methyllysine; alternate is present on K28. Residues K36 and K37 each carry the N6-methyllysine modification.

It belongs to the histone H3 family. In terms of assembly, the nucleosome is a histone octamer containing two molecules each of H2A, H2B, H3 and H4 assembled in one H3-H4 heterotetramer and two H2A-H2B heterodimers. The octamer wraps approximately 147 bp of DNA. Post-translationally, acetylation is generally linked to gene activation. Acetylated to form H3K9ac (11%), H3K14ac (17%), H3K18ac (11%), H3K23ac (16%) and H3K27ac (7%). H3K4, H3K35 and H3K36 are not acetylated. H3K4me prevents acetylation. 32% of the histone H3 are acetylated with, on average, 2.4 acetyl-Lys. They are all continuously deacatylated and re-acetylated with a half-life of approximately 2 minutes. In terms of processing, monomethylated to form H3K4me1 (81%), H3K9me1 (16%), H3K27me1 (25%), H3K35me1 (25%) and H3K36me1 (5%). No methylation at H3K14, H3K18 and H3K23. Methylated by a protein complex that includes Mut11. Set1 methylates specifically H3K4. H3K4me1 is associated with silenced euchromatin. Set3 forms H3K9me1, while H3K9me2 is undetected. H3K9me1 is specifically associated with silent, multi-copy transgenes. No phosphorylation detected.

The protein localises to the nucleus. The protein resides in the chromosome. Core component of nucleosome. Nucleosomes wrap and compact DNA into chromatin, limiting DNA accessibility to the cellular machineries which require DNA as a template. Histones thereby play a central role in transcription regulation, DNA repair, DNA replication and chromosomal stability. DNA accessibility is regulated via a complex set of post-translational modifications of histones, also called histone code, and nucleosome remodeling. This is Histone H3 type 2 (ch3-II) from Chlamydomonas reinhardtii (Chlamydomonas smithii).